The primary structure comprises 412 residues: MQLQLLKESGQREVFCGLTSIVWLHRRMPDAFFLVVGSRTCAHLIQSAAGVMIFAEPRFGTAILGERDLAGLADANEELDRVVADLLQRRPEIRTLFLVGSCPSEVIKLDLSKAAERLNQQHRGRVQVVNYSGSGIETTFTQGEDQALTALVPLMPQSTTPQLLLVGTLADGVEERFLTLFERLGIGPVASLPPRRSTELPAVGPGTKLLLTQPFLGQTARALQAKGAELISSPYPLGVEGSELWFRAAARAFGISDEHTTSVLEPLVTRGRAALEPHRKALEGKRLFLLPDSQMELALGRFLQRECGMELVEVGTPYLDRALQQEELDLLPADVQLSEGQNVEEQLQRVRQSHPDLVVCGMGLANPLEAEGITTKWSIELVFSPIHGCDQAGDLAELFARPLRRRGALTFA.

Residues Cys-16, Cys-41, and Cys-102 each contribute to the [4Fe-4S] cluster site.

This sequence belongs to the BchN/ChlN family. As to quaternary structure, protochlorophyllide reductase is composed of three subunits; ChlL, ChlN and ChlB. Forms a heterotetramer of two ChlB and two ChlN subunits. It depends on [4Fe-4S] cluster as a cofactor.

It carries out the reaction chlorophyllide a + oxidized 2[4Fe-4S]-[ferredoxin] + 2 ADP + 2 phosphate = protochlorophyllide a + reduced 2[4Fe-4S]-[ferredoxin] + 2 ATP + 2 H2O. Its pathway is porphyrin-containing compound metabolism; chlorophyll biosynthesis (light-independent). In terms of biological role, component of the dark-operative protochlorophyllide reductase (DPOR) that uses Mg-ATP and reduced ferredoxin to reduce ring D of protochlorophyllide (Pchlide) to form chlorophyllide a (Chlide). This reaction is light-independent. The NB-protein (ChlN-ChlB) is the catalytic component of the complex. This Synechococcus sp. (strain RCC307) protein is Light-independent protochlorophyllide reductase subunit N.